Reading from the N-terminus, the 164-residue chain is UPF0114 protein KPK_0696 (164 aa).

The next 4 membrane-spanning stretches (helical) occupy residues 15-35, 53-73, 109-126, and 136-156; these read LLAP…IKFF, LILT…LVMV, VAAS…RVFM, and LMWY…MGYL.

The protein belongs to the UPF0114 family.

It localises to the cell membrane. The chain is UPF0114 protein KPK_0696 from Klebsiella pneumoniae (strain 342).